Here is a 160-residue protein sequence, read N- to C-terminus: Cytochrome b6-f complex subunit 4 (160 aa).

Helical transmembrane passes span 36-56 (LLYI…GLAV), 95-115 (LLGI…PFIE), and 131-151 (AFFL…CLPI).

The protein belongs to the cytochrome b family. PetD subfamily. The 4 large subunits of the cytochrome b6-f complex are cytochrome b6, subunit IV (17 kDa polypeptide, PetD), cytochrome f and the Rieske protein, while the 4 small subunits are PetG, PetL, PetM and PetN. The complex functions as a dimer.

It is found in the cellular thylakoid membrane. Component of the cytochrome b6-f complex, which mediates electron transfer between photosystem II (PSII) and photosystem I (PSI), cyclic electron flow around PSI, and state transitions. In Prochlorococcus marinus (strain SARG / CCMP1375 / SS120), this protein is Cytochrome b6-f complex subunit 4.